A 132-amino-acid chain; its full sequence is Large ribosomal subunit protein bL17 (132 aa).

The protein belongs to the bacterial ribosomal protein bL17 family. Part of the 50S ribosomal subunit. Contacts protein L32.

In Shewanella sediminis (strain HAW-EB3), this protein is Large ribosomal subunit protein bL17.